We begin with the raw amino-acid sequence, 150 residues long: Large ribosomal subunit protein bL9 (150 aa).

It belongs to the bacterial ribosomal protein bL9 family.

In terms of biological role, binds to the 23S rRNA. The chain is Large ribosomal subunit protein bL9 from Pseudarthrobacter chlorophenolicus (strain ATCC 700700 / DSM 12829 / CIP 107037 / JCM 12360 / KCTC 9906 / NCIMB 13794 / A6) (Arthrobacter chlorophenolicus).